The primary structure comprises 398 residues: 1-deoxy-D-xylulose 5-phosphate reductoisomerase (398 aa).

T10, G11, S12, I13, G36, N38, and N124 together coordinate NADPH. K125 is a binding site for 1-deoxy-D-xylulose 5-phosphate. E126 is an NADPH binding site. D150 contributes to the Mn(2+) binding site. 4 residues coordinate 1-deoxy-D-xylulose 5-phosphate: S151, E152, S176, and H199. E152 serves as a coordination point for Mn(2+). Residue G205 coordinates NADPH. Residues S212, N217, K218, and E221 each coordinate 1-deoxy-D-xylulose 5-phosphate. E221 contributes to the Mn(2+) binding site.

This sequence belongs to the DXR family. Mg(2+) is required as a cofactor. Mn(2+) serves as cofactor.

The enzyme catalyses 2-C-methyl-D-erythritol 4-phosphate + NADP(+) = 1-deoxy-D-xylulose 5-phosphate + NADPH + H(+). Its pathway is isoprenoid biosynthesis; isopentenyl diphosphate biosynthesis via DXP pathway; isopentenyl diphosphate from 1-deoxy-D-xylulose 5-phosphate: step 1/6. Catalyzes the NADPH-dependent rearrangement and reduction of 1-deoxy-D-xylulose-5-phosphate (DXP) to 2-C-methyl-D-erythritol 4-phosphate (MEP). The sequence is that of 1-deoxy-D-xylulose 5-phosphate reductoisomerase from Nostoc punctiforme (strain ATCC 29133 / PCC 73102).